The chain runs to 507 residues: Glucose-6-phosphate isomerase (507 aa).

Glu338 acts as the Proton donor in catalysis. Residues His369 and Lys479 contribute to the active site.

The protein belongs to the GPI family.

It is found in the cytoplasm. It catalyses the reaction alpha-D-glucose 6-phosphate = beta-D-fructose 6-phosphate. It participates in carbohydrate biosynthesis; gluconeogenesis. It functions in the pathway carbohydrate degradation; glycolysis; D-glyceraldehyde 3-phosphate and glycerone phosphate from D-glucose: step 2/4. Its function is as follows. Provides a gateway for fructose into the Entner-Doudouroff pathway. In terms of biological role, catalyzes the reversible isomerization of glucose-6-phosphate to fructose-6-phosphate. The chain is Glucose-6-phosphate isomerase from Zymomonas mobilis subsp. mobilis (strain ATCC 31821 / ZM4 / CP4).